A 274-amino-acid chain; its full sequence is MKKTQTWIITCIYLQLLLFNPLVRTKGICRNRVTDDVKDVTKLVANLPKDYKIALNYVPGMDVLSSHCWIRVMVEQLSVSLTDLLDKFSNISEGLSNYSIIDKLVKIVDDLVECMEEHSSENVKKSPKNPEPRHFAPEDFFRIFNRSIDALKDLETVASKTSECVLPSTLSPEKDSRVSVTKPFMLPPVAASSLRNDSSSSNRKAANPLGDSNLQWAAMALPAFFSLVIGFAFGALYWKKKQPNLTRTAENIQINEEDNEISMLQEKEREFQEV.

Positions 1–25 (MKKTQTWIITCIYLQLLLFNPLVRT) are cleaved as a signal peptide. Residues 26–215 (KGICRNRVTD…ANPLGDSNLQ (190 aa)) lie on the Extracellular side of the membrane. 2 cysteine pairs are disulfide-bonded: Cys29/Cys114 and Cys68/Cys164. Asn90, Asn97, Asn145, and Asn196 each carry an N-linked (GlcNAc...) asparagine glycan. Residues 216–238 (WAAMALPAFFSLVIGFAFGALYW) traverse the membrane as a helical segment. Residues 239–274 (KKKQPNLTRTAENIQINEEDNEISMLQEKEREFQEV) lie on the Cytoplasmic side of the membrane.

The protein belongs to the SCF family. In terms of assembly, homodimer, non-covalently linked. Heterotetramer with KIT, binding two KIT molecules; thereby mediates KIT dimerization and subsequent activation by autophosphorylation. In terms of processing, a soluble form is produced by proteolytic processing of isoform 1 in the extracellular domain.

The protein localises to the cytoplasm. The protein resides in the cytoskeleton. Its subcellular location is the cell membrane. It is found in the cell projection. It localises to the lamellipodium. The protein localises to the filopodium. The protein resides in the secreted. In terms of biological role, ligand for the receptor-type protein-tyrosine kinase KIT. Plays an essential role in the regulation of cell survival and proliferation, hematopoiesis, stem cell maintenance, gametogenesis, mast cell development, migration and function, and in melanogenesis. KITLG/SCF binding can activate several signaling pathways. Promotes phosphorylation of PIK3R1, the regulatory subunit of phosphatidylinositol 3-kinase, and subsequent activation of the kinase AKT1. KITLG/SCF and KIT also transmit signals via GRB2 and activation of RAS, RAF1 and the MAP kinases MAPK1/ERK2 and/or MAPK3/ERK1. KITLG/SCF and KIT promote activation of STAT family members STAT1, STAT3 and STAT5. KITLG/SCF and KIT promote activation of PLCG1, leading to the production of the cellular signaling molecules diacylglycerol and inositol 1,4,5-trisphosphate. KITLG/SCF acts synergistically with other cytokines, probably interleukins. This Neovison vison (American mink) protein is Kit ligand (KITLG).